A 364-amino-acid chain; its full sequence is DNA polymerase IV (364 aa).

The 181-residue stretch at 6–186 folds into the UmuC domain; it reads IIHIDMDAFY…LPIESFWGVG (181 aa). Mg(2+) contacts are provided by D10 and D104. The active site involves E105.

It belongs to the DNA polymerase type-Y family. Monomer. Mg(2+) is required as a cofactor.

Its subcellular location is the cytoplasm. It catalyses the reaction DNA(n) + a 2'-deoxyribonucleoside 5'-triphosphate = DNA(n+1) + diphosphate. Poorly processive, error-prone DNA polymerase involved in untargeted mutagenesis. Copies undamaged DNA at stalled replication forks, which arise in vivo from mismatched or misaligned primer ends. These misaligned primers can be extended by PolIV. Exhibits no 3'-5' exonuclease (proofreading) activity. May be involved in translesional synthesis, in conjunction with the beta clamp from PolIII. This chain is DNA polymerase IV, found in Bacteroides fragilis (strain YCH46).